Consider the following 125-residue polypeptide: Classical arabinogalactan protein 27 (125 aa).

The N-terminal stretch at Met-1–Ser-21 is a signal peptide. Low complexity predominate over residues Leu-20 to Pro-36. Residues Leu-20–Ser-95 are disordered. The span at Ala-53–Leu-66 shows a compositional bias: polar residues. The span at Asp-77–Ser-95 shows a compositional bias: low complexity. Ser-98 carries GPI-anchor amidated serine lipidation. A propeptide spans Gln-99–Ile-125 (removed in mature form).

This sequence belongs to the classical AGP family. In terms of processing, O-glycosylated on the hydroxyproline residues.

It is found in the cell membrane. Its function is as follows. Proteoglycan that seems to be implicated in diverse developmental roles such as differentiation, cell-cell recognition, embryogenesis and programmed cell death. This is Classical arabinogalactan protein 27 (AGP27) from Arabidopsis thaliana (Mouse-ear cress).